Reading from the N-terminus, the 234-residue chain is Mitochondrial assembly of ribosomal large subunit protein 1 (234 aa).

The interval serine 63–threonine 88 is disordered.

The protein belongs to the Iojap/RsfS family. Associates with the mitochondrial ribosome large subunit (39S) via interaction with MRPL12 and/or MRPL14. The interaction generates steric hindrance that is expected to prevent premature association of the 28S and 39S ribosomal subunits. Interacts with intermediates of the mitochondrial ribosome large subunit (mt-LSU) (recruits the mitochondrial ribosome and complex I assembly factor AltMIEF1 and NDUFAB1); regulates mitochondrial ribosomes assembly. Interacts with MRPL12 and MRPL14.

It is found in the mitochondrion matrix. Required for normal mitochondrial ribosome function and mitochondrial translation. May play a role in ribosome biogenesis by preventing premature association of the 28S and 39S ribosomal subunits. Interacts with mitochondrial ribosomal protein uL14m (MRPL14), probably blocking formation of intersubunit bridge B8, preventing association of the 28S and 39S ribosomal subunits. Addition to isolated mitochondrial ribosomal subunits partially inhibits translation, probably by interfering with the association of the 28S and 39S ribosomal subunits and the formation of functional ribosomes. May also participate in the assembly and/or regulation of the stability of the large subunit of the mitochondrial ribosome. May function as a ribosomal silencing factor. The chain is Mitochondrial assembly of ribosomal large subunit protein 1 (MALSU1) from Homo sapiens (Human).